The sequence spans 323 residues: rRNA 2'-O-methyltransferase fibrillarin (323 aa).

A disordered region spans residues 1 to 78; it reads MRPGFSPRGG…GGGRGGFGGG (78 aa). Composition is skewed to gly residues over residues 7-44 and 63-78; these read PRGG…GGRG and GRGG…FGGG. An asymmetric dimethylarginine mark is found at R8, R17, R23, and R29. Residues 174–175, 193–194, 218–219, and 238–241 contribute to the S-adenosyl-L-methionine site; these read TT, EF, DA, and DVAQ. The tract at residues 276-308 is helical; that stretch reads APEAVFAAEVKKMQQENMKPQEQLTLEPYERDH.

This sequence belongs to the methyltransferase superfamily. Fibrillarin family. As to quaternary structure, component of box C/D small nucleolar ribonucleoprotein (snoRNP) particles. Part of the small subunit (SSU) processome, composed of more than 70 proteins and the RNA chaperone small nucleolar RNA (snoRNA) U3. In terms of processing, by homology to other fibrillarins, some or all of the N-terminal domain arginines are modified to asymmetric dimethylarginine (DMA).

It is found in the nucleus. The protein localises to the nucleolus. The protein resides in the nucleoplasm. The enzyme catalyses L-glutaminyl-[histone H2A] + S-adenosyl-L-methionine = N(5)-methyl-L-glutaminyl-[histone H2A] + S-adenosyl-L-homocysteine + H(+). It catalyses the reaction a ribonucleotide in rRNA + S-adenosyl-L-methionine = a 2'-O-methylribonucleotide in rRNA + S-adenosyl-L-homocysteine + H(+). The catalysed reaction is a ribonucleotide in U6 snRNA + S-adenosyl-L-methionine = a 2'-O-methylribonucleotide in U6 snRNA + S-adenosyl-L-homocysteine + H(+). Its function is as follows. S-adenosyl-L-methionine-dependent methyltransferase that has the ability to methylate both RNAs and proteins. Involved in pre-rRNA processing by catalyzing the site-specific 2'-hydroxyl methylation of ribose moieties in pre-ribosomal RNA. Probably catalyzes 2'-O-methylation of U6 snRNAs in box C/D RNP complexes. U6 snRNA 2'-O-methylation is required for mRNA splicing fidelity. Also acts as a protein methyltransferase by mediating methylation of 'Gln-105' of histone H2A (H2AQ104me), a modification that impairs binding of the FACT complex and is specifically present at 35S ribosomal DNA locus. Part of the small subunit (SSU) processome, first precursor of the small eukaryotic ribosomal subunit. During the assembly of the SSU processome in the nucleolus, many ribosome biogenesis factors, an RNA chaperone and ribosomal proteins associate with the nascent pre-rRNA and work in concert to generate RNA folding, modifications, rearrangements and cleavage as well as targeted degradation of pre-ribosomal RNA by the RNA exosome. The polypeptide is rRNA 2'-O-methyltransferase fibrillarin (fbl) (Xenopus laevis (African clawed frog)).